A 371-amino-acid polypeptide reads, in one-letter code: Chaperone protein DnaJ (371 aa).

Residues 5–69 (DYYEVLGLSK…QKRAQYDQFG (65 aa)) form the J domain. The segment at 133-215 (GKELNVEIPV…CHGSSKVRKR (83 aa)) adopts a CR-type zinc-finger fold. Residues C146, C149, C163, C166, C189, C192, C203, and C206 each coordinate Zn(2+). CXXCXGXG motif repeat units lie at residues 146-153 (CDTCKGSG), 163-170 (CKHCSGSG), 189-196 (CGHCSGTG), and 203-210 (CTTCHGSS).

Belongs to the DnaJ family. Homodimer. Requires Zn(2+) as cofactor.

It is found in the cytoplasm. Participates actively in the response to hyperosmotic and heat shock by preventing the aggregation of stress-denatured proteins and by disaggregating proteins, also in an autonomous, DnaK-independent fashion. Unfolded proteins bind initially to DnaJ; upon interaction with the DnaJ-bound protein, DnaK hydrolyzes its bound ATP, resulting in the formation of a stable complex. GrpE releases ADP from DnaK; ATP binding to DnaK triggers the release of the substrate protein, thus completing the reaction cycle. Several rounds of ATP-dependent interactions between DnaJ, DnaK and GrpE are required for fully efficient folding. Also involved, together with DnaK and GrpE, in the DNA replication of plasmids through activation of initiation proteins. This Bacillus cereus (strain ATCC 14579 / DSM 31 / CCUG 7414 / JCM 2152 / NBRC 15305 / NCIMB 9373 / NCTC 2599 / NRRL B-3711) protein is Chaperone protein DnaJ.